The following is a 625-amino-acid chain: DELLA protein SLR1 (625 aa).

The disordered stretch occupies residues Met1 to Glu34. A DELLA motif motif is present at residues Asp39 to Ala43. The tract at residues Thr167–Val209 is disordered. The segment covering Thr189 to Ser198 has biased composition (low complexity). A GRAS domain is found at Val232 to Arg621. The segment at Ile239 to Tyr294 is leucine repeat I (LRI). The segment at Leu241–Met278 is required for possible homodimerization. A LxCxE motif motif is present at residues Leu246–Glu250. The segment at His313–Gly378 is VHIID. The VHIID signature appears at Val344–Asp348. Residues Gln392 to Glu431 are leucine repeat II (LRII). The segment at Ile441 to Asn542 is PFYRE. Positions Leu449–Leu453 match the LXXLL motif motif. Residues Ala545 to Arg621 are SAW.

This sequence belongs to the GRAS family. DELLA subfamily. May be a homodimer. Interacts directly with the GID2 component of the SCF(GID2) complex. Interacts with GID1 in a GA-dependent manner, probably leading to its interaction with GID2 and its subsequent degradation. Interacts with D14 and GID1 in an strigolactone-dependent manner. Interacts with HD16/EL1. In terms of processing, phosphorylated on Ser/Thr residues in the N-terminal part. Both phosphorylated and unphosphorylated forms are degraded upon GA treatment, suggesting that phosphorylation does not trigger ubiquitination. Phosphorylated by HD16/EL1. Phosphorylation enhances its stability. Ubiquitinated. Upon GA application it is ubiquitinated by the SCF(GID2) complex, leading to its subsequent degradation. As to expression, expressed in nodes, internodes, leaf sheats of young seedlings and ears of adult plants. Weakly expressed in leaf blade and root.

The protein localises to the nucleus. Probable transcriptional regulator that acts as a repressor of the gibberellin (GA) signaling pathway. Probably acts by participating in large multiprotein complexes that repress transcription of GA-inducible genes. Upon GA application, it is degraded by the proteasome, allowing the GA signaling pathway. In contrast, its overexpression prevents the GA signaling pathway and induces a dwarf phenotype. The protein is DELLA protein SLR1 of Oryza sativa subsp. japonica (Rice).